Consider the following 483-residue polypeptide: UDP-N-acetylmuramate--L-alanine ligase (483 aa).

Position 122 to 128 (122 to 128) interacts with ATP; that stretch reads GSHGKTT.

This sequence belongs to the MurCDEF family.

Its subcellular location is the cytoplasm. It carries out the reaction UDP-N-acetyl-alpha-D-muramate + L-alanine + ATP = UDP-N-acetyl-alpha-D-muramoyl-L-alanine + ADP + phosphate + H(+). The protein operates within cell wall biogenesis; peptidoglycan biosynthesis. Its function is as follows. Cell wall formation. The sequence is that of UDP-N-acetylmuramate--L-alanine ligase from Synechococcus sp. (strain CC9311).